The chain runs to 203 residues: Peptidyl-tRNA hydrolase (203 aa).

TRNA is bound at residue Y14. The active-site Proton acceptor is the H19. 3 residues coordinate tRNA: Y64, N66, and N112.

This sequence belongs to the PTH family. In terms of assembly, monomer.

Its subcellular location is the cytoplasm. It catalyses the reaction an N-acyl-L-alpha-aminoacyl-tRNA + H2O = an N-acyl-L-amino acid + a tRNA + H(+). Its function is as follows. Hydrolyzes ribosome-free peptidyl-tRNAs (with 1 or more amino acids incorporated), which drop off the ribosome during protein synthesis, or as a result of ribosome stalling. Functionally, catalyzes the release of premature peptidyl moieties from peptidyl-tRNA molecules trapped in stalled 50S ribosomal subunits, and thus maintains levels of free tRNAs and 50S ribosomes. The protein is Peptidyl-tRNA hydrolase of Methylobacterium sp. (strain 4-46).